A 521-amino-acid polypeptide reads, in one-letter code: Transcription activator of gluconeogenesis SS1G_02293 (521 aa).

Acidic residues predominate over residues 1–12 (MSGETEIDDPEV). The interval 1 to 75 (MSGETEIDDP…KFDPKDPLRP (75 aa)) is disordered. Basic and acidic residues-rich tracts occupy residues 21–49 (YSDHEQELDVVGKEDDNQEMAEQKVRPDG) and 65–74 (PKFDPKDPLR). The segment at residues 84-112 (CFACQRAHLTCGDERPCQRCIKRGLADAC) is a DNA-binding region (zn(2)-C6 fungal-type). Disordered regions lie at residues 273 to 308 (SGSAETPPQDSSAGMPQNVGDLGYNNNPAFNNNPPF), 322 to 358 (VAPPGAHRPAKRQDTKSGPSGKLGPSSALGKRNRDPS), and 478 to 501 (NTGNSGASSSGSSGRGSFTTPRMR). The span at 275–287 (SAETPPQDSSAGM) shows a compositional bias: polar residues. Low complexity-rich tracts occupy residues 297–308 (NNNPAFNNNPPF), 337–351 (KSGPSGKLGPSSALG), and 480–494 (GNSGASSSGSSGRGS). One can recognise a PAS domain in the interval 426–497 (TLFEYEDFML…GSSGRGSFTT (72 aa)).

Belongs to the ERT1/acuK family.

Its subcellular location is the nucleus. In terms of biological role, transcription factor which regulates nonfermentable carbon utilization. Activator of gluconeogenetic genes. The polypeptide is Transcription activator of gluconeogenesis SS1G_02293 (Sclerotinia sclerotiorum (strain ATCC 18683 / 1980 / Ss-1) (White mold)).